Here is a 155-residue protein sequence, read N- to C-terminus: Small ribosomal subunit protein uS7c (155 aa).

Belongs to the universal ribosomal protein uS7 family. Part of the 30S ribosomal subunit.

It localises to the plastid. The protein resides in the chloroplast. Functionally, one of the primary rRNA binding proteins, it binds directly to 16S rRNA where it nucleates assembly of the head domain of the 30S subunit. This Dioscorea bulbifera (Air potato) protein is Small ribosomal subunit protein uS7c (rps7).